Here is a 286-residue protein sequence, read N- to C-terminus: Transcription factor egl-46 (286 aa).

A C2H2-type 1; atypical zinc finger spans residues 180–200 (CICRLCKVKYEDVFKLAQHKC). 2 C2H2-type zinc fingers span residues 208–230 (YKCPDCDKVFSCPANLASHRRWH) and 248–271 (VSCSTCFNSFPTKKMLKLHSSTCQ).

It belongs to the INSM1 family. Interacts (via C-terminus) with egl-44 (via N-terminus); the interaction is direct; the interaction may regulate transcription. Expressed in touch cells, HSN cells, ventral cord motor neurons and ciliated ray neurons.

It is found in the nucleus. Functionally, transcription factor. Represses expression of genes involved in differentiation of touch receptor neurons (TRN), probably acting as a heterodimer with egl-44, perhaps by occupying similar cis-regulatory elements as an unc-86/mec-3 heterodimer. Plays a role in cell fate specification of neurons, including the hook neuron HOB, the gas-sensing neuron BAG and touch receptor neurons. Plays a role in neuron differentiation by repressing the expression of zag-1 in FLP neurons, probably acting as a heterodimer with egl-44; because zag-1 represses expression of egl-46 and egl-44, together these proteins form a bistable, negative-feedback loop that regulates the choice between neuronal fates. Acts downstream of egl-44 to prevent touch cell differentiation in FLP neurons. Involved in male mating behavior, acting in concert with egl-44, via modulation of expression of polycystins lov-1 and pkd-2, homeodomain protein ceh-26, and neuropeptide-like protein nlp-8. Modulates the expression of a subset of terminal differentiation genes involved in O(2)- and CO(2)-sensing, acting in parallel to ets-5 and egl-13. May act upstream of RFX transcription factor daf-19 to regulate gene expression specifically in the HOB neuron. Plays a role in specifying commissural dendrites of the PVD nociceptive neurons, acting in concert with egl-44. In association with egl-44, regulates cell cycle exit in the neuronal Q cell lineage. The chain is Transcription factor egl-46 from Caenorhabditis elegans.